Reading from the N-terminus, the 183-residue chain is Oligoribonuclease (183 aa).

Residues 10 to 173 form the Exonuclease domain; that stretch reads LIWIDLEMTG…ADIRESIAEL (164 aa). Tyr131 is a catalytic residue.

It belongs to the oligoribonuclease family.

Its subcellular location is the cytoplasm. In terms of biological role, 3'-to-5' exoribonuclease specific for small oligoribonucleotides. The chain is Oligoribonuclease from Idiomarina loihiensis (strain ATCC BAA-735 / DSM 15497 / L2-TR).